Reading from the N-terminus, the 352-residue chain is ATPase GET3 (352 aa).

26–33 (KGGVGKTT) is an ATP binding site. Residue Asp57 is part of the active site. ATP is bound by residues Glu243 and Asn270. 2 residues coordinate Zn(2+): Cys283 and Cys286.

It belongs to the arsA ATPase family. As to quaternary structure, homodimer. Component of the Golgi to ER traffic (GET) complex, which is composed of GET1, GET2 and GET3. Within the complex, GET1 and GET2 form a heterotetramer which is stabilized by phosphatidylinositol binding and which binds to the GET3 homodimer. Interacts with the chloride channel protein GEF1.

Its subcellular location is the cytoplasm. The protein localises to the endoplasmic reticulum. It is found in the golgi apparatus. ATPase required for the post-translational delivery of tail-anchored (TA) proteins to the endoplasmic reticulum. Recognizes and selectively binds the transmembrane domain of TA proteins in the cytosol. This complex then targets to the endoplasmic reticulum by membrane-bound receptors GET1 and GET2, where the tail-anchored protein is released for insertion. This process is regulated by ATP binding and hydrolysis. ATP binding drives the homodimer towards the closed dimer state, facilitating recognition of newly synthesized TA membrane proteins. ATP hydrolysis is required for insertion. Subsequently, the homodimer reverts towards the open dimer state, lowering its affinity for the GET1-GET2 receptor, and returning it to the cytosol to initiate a new round of targeting. Cooperates with the HDEL receptor ERD2 to mediate the ATP-dependent retrieval of resident ER proteins that contain a C-terminal H-D-E-L retention signal from the Golgi to the ER. Involved in low-level resistance to the oxyanions arsenite and arsenate, and in heat tolerance. The protein is ATPase GET3 of Vanderwaltozyma polyspora (strain ATCC 22028 / DSM 70294 / BCRC 21397 / CBS 2163 / NBRC 10782 / NRRL Y-8283 / UCD 57-17) (Kluyveromyces polysporus).